The following is a 481-amino-acid chain: Hyaluronidase-4 (481 aa).

At 1 to 11 the chain is on the cytoplasmic side; it reads MQLLPEGQLRL. A helical transmembrane segment spans residues 12–32; that stretch reads CVFQPVHLTSGLLILFILKSI. The Extracellular segment spans residues 33–455; sequence SSLKPARLPV…CREMTEASGP (423 aa). 5 disulfides stabilise this stretch: C59–C351, C223–C237, C376–C387, C381–C435, and C437–C446. Residues N64 and N115 are each glycosylated (N-linked (GlcNAc...) asparagine). E147 acts as the Proton donor in catalysis. N-linked (GlcNAc...) asparagine glycosylation is found at N232 and N343. Residues 456–476 form a helical membrane-spanning segment; the sequence is SGLSLSSSSVITLCLLVLAGY. Residues 477–481 lie on the Cytoplasmic side of the membrane; sequence QSIQL.

The protein belongs to the glycosyl hydrolase 56 family.

It localises to the membrane. The enzyme catalyses Random hydrolysis of (1-&gt;4)-linkages between N-acetyl-beta-D-glucosamine and D-glucuronate residues in hyaluronate.. Its function is as follows. Endo-hyaluronidase that degrades hyaluronan to smaller oligosaccharide fragments. Also has chondroitin sulfate hydrolase activity, The best substrate being the galactosaminidic linkage in the sequence of a trisulfated tetrasaccharide. This is Hyaluronidase-4 (Hyal4) from Mus musculus (Mouse).